The sequence spans 480 residues: Cobyric acid synthase (480 aa).

In terms of domain architecture, GATase cobBQ-type spans 246-434 (KILIAVPILP…VHGLFSELAQ (189 aa)). Catalysis depends on C328, which acts as the Nucleophile. H426 is an active-site residue.

The protein belongs to the CobB/CobQ family. CobQ subfamily.

It functions in the pathway cofactor biosynthesis; adenosylcobalamin biosynthesis. Functionally, catalyzes amidations at positions B, D, E, and G on adenosylcobyrinic A,C-diamide. NH(2) groups are provided by glutamine, and one molecule of ATP is hydrogenolyzed for each amidation. The sequence is that of Cobyric acid synthase from Methylocella silvestris (strain DSM 15510 / CIP 108128 / LMG 27833 / NCIMB 13906 / BL2).